Here is a 401-residue protein sequence, read N- to C-terminus: MSLFNINKSKKYLIAVSGGPDSVFLLCNIVKLVDPNDLVVCHVNYNFRSDSNNDQMIVTNLCKQLNLKLEILNINKDYSLLKQNFESWARAQRYDFFNMIASKYQIYNLLVAHNLNDLIETYLLQLQRNNLVDYYGLKPVSHYKDLVVYRPLLDIKKSQILNYLNTNKISYAVDSTNSDIKYQRNKIRATLNENNFTKILDQINKANNNLNSIKKIVDNYLKNNIINNELNLTKELFLLDQTCIQRIIYTYFKLINKENLLLNRSNKTISEIVKRLVNSNKNYWKINLNDHSLIKDYNKLFVIKNSLLEPKTIIINDLNDLINQTTFKNIKEIEQIILKDKNFSYVITTDYEMYKSITTIANKKTNRYFIDRKISYKTRLLSPVVYNIKNKIILNKIKKHY.

17–22 is a binding site for ATP; it reads SGGPDS.

This sequence belongs to the tRNA(Ile)-lysidine synthase family.

The protein resides in the cytoplasm. The enzyme catalyses cytidine(34) in tRNA(Ile2) + L-lysine + ATP = lysidine(34) in tRNA(Ile2) + AMP + diphosphate + H(+). Functionally, ligates lysine onto the cytidine present at position 34 of the AUA codon-specific tRNA(Ile) that contains the anticodon CAU, in an ATP-dependent manner. Cytidine is converted to lysidine, thus changing the amino acid specificity of the tRNA from methionine to isoleucine. In Mycoplasma mycoides subsp. mycoides SC (strain CCUG 32753 / NCTC 10114 / PG1), this protein is tRNA(Ile)-lysidine synthase.